Here is a 283-residue protein sequence, read N- to C-terminus: Homeobox-leucine zipper protein HAT2 (283 aa).

The tract at residues 64–134 (VNCEEDTGVS…GETSRKKLRL (71 aa)) is disordered. A compositionally biased stretch (low complexity) spans 73–84 (SSPNSTISSTIS). Positions 127 to 186 (TSRKKLRLSKDQSAFLEETFKEHNTLNPKQKLALAKKLNLTARQVEVWFQNRRARTKLKQ) form a DNA-binding region, homeobox. The segment at 194–215 (LKRCVEKLTEENRRLQKEAMEL) is leucine-zipper.

The protein belongs to the HD-ZIP homeobox family. Class II subfamily. In terms of assembly, interacts with RBR1.

It is found in the nucleus. Probable transcription factor that plays a role in auxin-mediated morphogenesis. Negatively regulates lateral root elongation. The sequence is that of Homeobox-leucine zipper protein HAT2 (HAT2) from Arabidopsis thaliana (Mouse-ear cress).